A 218-amino-acid chain; its full sequence is Protein-L-isoaspartate O-methyltransferase (218 aa).

S60 is an active-site residue.

The protein belongs to the methyltransferase superfamily. L-isoaspartyl/D-aspartyl protein methyltransferase family.

It is found in the cytoplasm. It catalyses the reaction [protein]-L-isoaspartate + S-adenosyl-L-methionine = [protein]-L-isoaspartate alpha-methyl ester + S-adenosyl-L-homocysteine. Catalyzes the methyl esterification of L-isoaspartyl residues in peptides and proteins that result from spontaneous decomposition of normal L-aspartyl and L-asparaginyl residues. It plays a role in the repair and/or degradation of damaged proteins. The protein is Protein-L-isoaspartate O-methyltransferase of Roseiflexus sp. (strain RS-1).